We begin with the raw amino-acid sequence, 82 residues long: Turripeptide Gsp9.2 (82 aa).

The signal sequence occupies residues 1–23 (MMAKLMITVMMVLLLSLQQGADG). The propeptide occupies 24-46 (RSERWRKNQMAASSIMRNLITAR). 4-hydroxyproline is present on residues P49 and P50. 3 cysteine pairs are disulfide-bonded: C53-C68, C58-C72, and C64-C79. E56 carries the 4-carboxyglutamate modification.

The protein belongs to the Pg turripeptide superfamily. As to expression, expressed by the venom duct.

The protein localises to the secreted. This Gemmula speciosa (Splendid gem-turris) protein is Turripeptide Gsp9.2.